The primary structure comprises 339 residues: D-erythrose-4-phosphate dehydrogenase (339 aa).

11–12 is an NAD(+) binding site; the sequence is RI. Residues 158-160, R204, 217-218, and R240 contribute to the substrate site; these read SCT and TK. Catalysis depends on C159, which acts as the Nucleophile. Residue N322 coordinates NAD(+).

The protein belongs to the glyceraldehyde-3-phosphate dehydrogenase family. Epd subfamily. As to quaternary structure, homotetramer.

The protein localises to the cytoplasm. It catalyses the reaction D-erythrose 4-phosphate + NAD(+) + H2O = 4-phospho-D-erythronate + NADH + 2 H(+). The protein operates within cofactor biosynthesis; pyridoxine 5'-phosphate biosynthesis; pyridoxine 5'-phosphate from D-erythrose 4-phosphate: step 1/5. In terms of biological role, catalyzes the NAD-dependent conversion of D-erythrose 4-phosphate to 4-phosphoerythronate. This chain is D-erythrose-4-phosphate dehydrogenase, found in Aliivibrio fischeri (strain MJ11) (Vibrio fischeri).